Reading from the N-terminus, the 434-residue chain is D-amino acid dehydrogenase (434 aa).

3 to 17 (VVILGSGVVGVASAW) contributes to the FAD binding site.

Belongs to the DadA oxidoreductase family. The cofactor is FAD.

The catalysed reaction is a D-alpha-amino acid + A + H2O = a 2-oxocarboxylate + AH2 + NH4(+). It functions in the pathway amino-acid degradation; D-alanine degradation; NH(3) and pyruvate from D-alanine: step 1/1. In terms of biological role, oxidative deamination of D-amino acids. The polypeptide is D-amino acid dehydrogenase (Serratia proteamaculans (strain 568)).